The sequence spans 181 residues: Translation initiation factor IF-3 (181 aa).

This sequence belongs to the IF-3 family. As to quaternary structure, monomer.

It is found in the cytoplasm. In terms of biological role, IF-3 binds to the 30S ribosomal subunit and shifts the equilibrium between 70S ribosomes and their 50S and 30S subunits in favor of the free subunits, thus enhancing the availability of 30S subunits on which protein synthesis initiation begins. The protein is Translation initiation factor IF-3 of Idiomarina loihiensis (strain ATCC BAA-735 / DSM 15497 / L2-TR).